The following is a 516-amino-acid chain: Oxysterol-binding protein-like protein 1 (516 aa).

Disordered stretches follow at residues 168–240 and 459–501; these read PLGK…SQKS and KQEI…EEGK. Over residues 178–187 the composition is skewed to polar residues; that stretch reads SRTTSSQSVA. The residue at position 182 (Ser-182) is a Phosphoserine. The segment covering 197–206 has biased composition (basic residues); sequence TSKKKSSKKN. A compositionally biased stretch (polar residues) spans 218 to 238; sequence DRSSTAPSTAESNNEHLSSSQ.

Belongs to the OSBP family.

Its subcellular location is the endoplasmic reticulum. The polypeptide is Oxysterol-binding protein-like protein 1 (obp1) (Schizosaccharomyces pombe (strain 972 / ATCC 24843) (Fission yeast)).